The primary structure comprises 626 residues: Basic helix-loop-helix ARNT-like protein 1 (626 aa).

The tract at residues 1–58 (MADQRMDISSTISDFMSPGPTDLLSSSLGTSGVDCNRKRKGSATDYQESMDTDKDDPH) is disordered. Residue S17 is modified to Phosphoserine; by GSK3-beta. Over residues 17–32 (SPGPTDLLSSSLGTSG) the composition is skewed to low complexity. T21 carries the post-translational modification Phosphothreonine; by GSK3-beta. The short motif at 36–41 (NRKRKG) is the Nuclear localization signal element. The bHLH domain occupies 72-125 (NAREAHSQIEKRRRDKMNSFIDELASLVPTCNAMSRKLDKLTVLRMAVQHMKTL). S78 carries the post-translational modification Phosphoserine. Residue S90 is modified to Phosphoserine; by CK2. The short motif at 142 to 152 (LSDDELKHLIL) is the Nuclear export signal 1 element. The 73-residue stretch at 143-215 (SDDELKHLIL…EQLSSSDTAP (73 aa)) folds into the PAS 1 domain. A Glycyl lysine isopeptide (Lys-Gly) (interchain with G-Cter in SUMO2 and SUMO3) cross-link involves residue K252. A Glycyl lysine isopeptide (Lys-Gly) (interchain with G-Cter in SUMO); alternate cross-link involves residue K259. K259 is covalently cross-linked (Glycyl lysine isopeptide (Lys-Gly) (interchain with G-Cter in SUMO2); alternate). Positions 326 to 396 (PQPVNGEIRV…ECHRQVLQTR (71 aa)) constitute a PAS 2 domain. The Nuclear export signal 2 signature appears at 361-369 (LAYLPQELL). One can recognise a PAC domain in the interval 401–444 (TNCYKFKIKDGSFITLRSRWFSFMNPWTKEVEYIVSTNTVVLAN). 2 disordered regions span residues 459–492 (SPHS…RAGA) and 511–595 (GSSP…SPSN). Residues 508–588 (RIRGSSPSSC…IGIDMIDNDQ (81 aa)) form an interaction with CIART region. Positions 511-521 (GSSPSSCGSSP) are enriched in low complexity. The residue at position 538 (K538) is an N6-acetyllysine.

Component of the circadian clock oscillator which includes the CRY1/2 proteins, CLOCK or NPAS2, BMAL1 or BMAL2, CSNK1D and/or CSNK1E, TIMELESS and the PER1/2/3 proteins. Forms a heterodimer with CLOCK. The CLOCK-BMAL1 heterodimer is required for E-box-dependent transactivation, for CLOCK nuclear translocation and degradation, and, for phosphorylation of both CLOCK and BMAL1. Part of a nuclear complex which also includes RACK1 and PRKCA; RACK1 and PRKCA are recruited to the complex in a circadian manner. Interacts with NPAS2. Interacts with EZH2. Interacts with SUMO3. Interacts with SIRT1. Interacts with AHR. Interacts with ID1, ID2 and ID3. Interacts with DDX4. Interacts with OGT. Interacts with EED and SUZ12. Interacts with MTA1. Interacts with CIART. Interacts with HSP90. Interacts with KAT2B and EP300. Interacts with BHLHE40/DEC1 and BHLHE41/DEC2. Interacts with RELB and the interaction is enhanced in the presence of CLOCK. Interacts with PER1, PER2, CRY1 and CRY2 and this interaction requires a translocation to the nucleus. Interaction of the CLOCK-BMAL1 heterodimer with PER or CRY inhibits transcription activation. Interaction of the CLOCK-BMAL1 with CRY1 is independent of DNA but with PER2 is off DNA. The CLOCK-BMAL1 heterodimer interacts with GSK3B. Interacts with KDM5A. Interacts with KMT2A; in a circadian manner. Interacts with UBE3A. Interacts with PRKCG. Interacts with MAGEL2. Interacts with NCOA2. Interacts with THRAP3. The CLOCK-BMAL1 heterodimer interacts with PASD1. Interacts with PASD1. Interacts with USP9X. Interacts with PIWIL2 (via PIWI domain). Interacts with HDAC3. Interacts with HNF4A. Post-translationally, ubiquitinated, leading to its proteasomal degradation. Deubiquitinated by USP9X. O-glycosylated; contains O-GlcNAc. O-glycosylation by OGT prevents protein degradation by inhibiting ubiquitination. It also stabilizes the CLOCK-BMAL1 heterodimer thereby increasing CLOCK-BMAL1-mediated transcription of genes in the negative loop of the circadian clock such as PER1/2/3 and CRY1/2. In terms of processing, acetylated on Lys-538 by CLOCK during the repression phase of the circadian cycle. Acetylation facilitates recruitment of CRY1 protein and initiates the repression phase of the circadian cycle. Acetylated at Lys-538 by KAT5 during the activation phase of the cycle, leading to recruitment of the positive transcription elongation factor b (P-TEFb) and BRD4, followed by productive elongation of circadian transcripts. Deacetylated by SIRT1, which may result in decreased protein stability. Post-translationally, phosphorylated upon dimerization with CLOCK. Phosphorylation enhances the transcriptional activity, alters the subcellular localization and decreases the stability of the CLOCK-BMAL1 heterodimer by promoting its degradation. Phosphorylation shows circadian variations in the liver with a peak between CT10 to CT14. Phosphorylation at Ser-90 by CK2 is essential for its nuclear localization, its interaction with CLOCK and controls CLOCK nuclear entry. Dephosphorylation at Ser-78 is important for dimerization with CLOCK and transcriptional activity. Sumoylated on Lys-259 upon dimerization with CLOCK. Predominantly conjugated to poly-SUMO2/3 rather than SUMO1 and the level of these conjugates undergo rhythmic variation, peaking at CT9-CT12. Sumoylation localizes it exclusively to the PML body and promotes its ubiquitination in the PML body, ubiquitin-dependent proteasomal degradation and the transcriptional activity of the CLOCK-BMAL1 heterodimer. In terms of processing, undergoes lysosome-mediated degradation in a time-dependent manner in the liver.

It is found in the nucleus. Its subcellular location is the cytoplasm. The protein resides in the PML body. Its function is as follows. Transcriptional activator which forms a core component of the circadian clock. The circadian clock, an internal time-keeping system, regulates various physiological processes through the generation of approximately 24 hour circadian rhythms in gene expression, which are translated into rhythms in metabolism and behavior. It is derived from the Latin roots 'circa' (about) and 'diem' (day) and acts as an important regulator of a wide array of physiological functions including metabolism, sleep, body temperature, blood pressure, endocrine, immune, cardiovascular, and renal function. Consists of two major components: the central clock, residing in the suprachiasmatic nucleus (SCN) of the brain, and the peripheral clocks that are present in nearly every tissue and organ system. Both the central and peripheral clocks can be reset by environmental cues, also known as Zeitgebers (German for 'timegivers'). The predominant Zeitgeber for the central clock is light, which is sensed by retina and signals directly to the SCN. The central clock entrains the peripheral clocks through neuronal and hormonal signals, body temperature and feeding-related cues, aligning all clocks with the external light/dark cycle. Circadian rhythms allow an organism to achieve temporal homeostasis with its environment at the molecular level by regulating gene expression to create a peak of protein expression once every 24 hours to control when a particular physiological process is most active with respect to the solar day. Transcription and translation of core clock components (CLOCK, NPAS2, BMAL1, BMAL2, PER1, PER2, PER3, CRY1 and CRY2) plays a critical role in rhythm generation, whereas delays imposed by post-translational modifications (PTMs) are important for determining the period (tau) of the rhythms (tau refers to the period of a rhythm and is the length, in time, of one complete cycle). A diurnal rhythm is synchronized with the day/night cycle, while the ultradian and infradian rhythms have a period shorter and longer than 24 hours, respectively. Disruptions in the circadian rhythms contribute to the pathology of cardiovascular diseases, cancer, metabolic syndromes and aging. A transcription/translation feedback loop (TTFL) forms the core of the molecular circadian clock mechanism. Transcription factors, CLOCK or NPAS2 and BMAL1 or BMAL2, form the positive limb of the feedback loop, act in the form of a heterodimer and activate the transcription of core clock genes and clock-controlled genes (involved in key metabolic processes), harboring E-box elements (5'-CACGTG-3') within their promoters. The core clock genes: PER1/2/3 and CRY1/2 which are transcriptional repressors form the negative limb of the feedback loop and interact with the CLOCK|NPAS2-BMAL1|BMAL2 heterodimer inhibiting its activity and thereby negatively regulating their own expression. This heterodimer also activates nuclear receptors NR1D1/2 and RORA/B/G, which form a second feedback loop and which activate and repress BMAL1 transcription, respectively. BMAL1 positively regulates myogenesis and negatively regulates adipogenesis via the transcriptional control of the genes of the canonical Wnt signaling pathway. Plays a role in normal pancreatic beta-cell function; regulates glucose-stimulated insulin secretion via the regulation of antioxidant genes NFE2L2/NRF2 and its targets SESN2, PRDX3, CCLC and CCLM. Negatively regulates the mTORC1 signaling pathway; regulates the expression of MTOR and DEPTOR. Controls diurnal oscillations of Ly6C inflammatory monocytes; rhythmic recruitment of the PRC2 complex imparts diurnal variation to chemokine expression that is necessary to sustain Ly6C monocyte rhythms. Regulates the expression of HSD3B2, STAR, PTGS2, CYP11A1, CYP19A1 and LHCGR in the ovary and also the genes involved in hair growth. Plays an important role in adult hippocampal neurogenesis by regulating the timely entry of neural stem/progenitor cells (NSPCs) into the cell cycle and the number of cell divisions that take place prior to cell-cycle exit. Regulates the circadian expression of CIART and KLF11. The CLOCK-BMAL1 heterodimer regulates the circadian expression of SERPINE1/PAI1, VWF, B3, CCRN4L/NOC, NAMPT, DBP, MYOD1, PPARGC1A, PPARGC1B, SIRT1, GYS2, F7, NGFR, GNRHR, BHLHE40/DEC1, ATF4, MTA1, KLF10 and also genes implicated in glucose and lipid metabolism. Promotes rhythmic chromatin opening, regulating the DNA accessibility of other transcription factors. The NPAS2-BMAL1 heterodimer positively regulates the expression of MAOA, F7 and LDHA and modulates the circadian rhythm of daytime contrast sensitivity by regulating the rhythmic expression of adenylate cyclase type 1 (ADCY1) in the retina. The preferred binding motif for the CLOCK-BMAL1 heterodimer is 5'-CACGTGA-3', which contains a flanking adenine nucleotide at the 3-prime end of the canonical 6-nucleotide E-box sequence. CLOCK specifically binds to the half-site 5'-CAC-3', while BMAL1 binds to the half-site 5'-GTGA-3'. The CLOCK-BMAL1 heterodimer also recognizes the non-canonical E-box motifs 5'-AACGTGA-3' and 5'-CATGTGA-3'. Essential for the rhythmic interaction of CLOCK with ASS1 and plays a critical role in positively regulating CLOCK-mediated acetylation of ASS1. Plays a role in protecting against lethal sepsis by limiting the expression of immune checkpoint protein CD274 in macrophages in a PKM2-dependent manner. Regulates the diurnal rhythms of skeletal muscle metabolism via transcriptional activation of genes promoting triglyceride synthesis (DGAT2) and metabolic efficiency (COQ10B). The polypeptide is Basic helix-loop-helix ARNT-like protein 1 (BMAL1) (Mesocricetus auratus (Golden hamster)).